Here is a 695-residue protein sequence, read N- to C-terminus: FMR1-interacting protein NUFIP2 (695 aa).

The disordered stretch occupies residues 1 to 100 (MEEKPGQPQP…KTGYGELNGN (100 aa)). Composition is skewed to basic residues over residues 11–23 (QHHH…HHHP) and 30–53 (PHHH…HHQQ). Lys-78 is covalently cross-linked (Glycyl lysine isopeptide (Lys-Gly) (interchain with G-Cter in SUMO2)). Thr-87 bears the Phosphothreonine mark. Residue Lys-109 forms a Glycyl lysine isopeptide (Lys-Gly) (interchain with G-Cter in SUMO2) linkage. 2 positions are modified to phosphoserine: Ser-112 and Ser-113. Residues Lys-136, Lys-146, Lys-157, and Lys-171 each participate in a glycyl lysine isopeptide (Lys-Gly) (interchain with G-Cter in SUMO2) cross-link. Disordered stretches follow at residues 155–189 (IQKN…IPNG), 204–234 (GKGA…AKGC), 261–341 (FKPD…KPPP), and 369–402 (TIQN…SQVP). Residues 159–182 (SMDKKNGKSYENKSGENQSVDKSD) show a composition bias toward basic and acidic residues. Ser-212 and Ser-214 each carry phosphoserine. Tyr-218 is subject to Phosphotyrosine. 2 positions are modified to phosphothreonine: Thr-219 and Thr-220. Positions 221–230 (PKKRKARRNS) are enriched in basic residues. Basic and acidic residues predominate over residues 261–275 (FKPDYSEQKGNRVDG). Glycyl lysine isopeptide (Lys-Gly) (interchain with G-Cter in SUMO2) cross-links involve residues Lys-262 and Lys-281. Position 291 is an omega-N-methylarginine (Arg-291). Lys-293 is covalently cross-linked (Glycyl lysine isopeptide (Lys-Gly) (interchain with G-Cter in SUMO2)). The residue at position 304 (Ser-304) is a Phosphoserine. Lys-307 participates in a covalent cross-link: Glycyl lysine isopeptide (Lys-Gly) (interchain with G-Cter in SUMO2). Low complexity predominate over residues 373-396 (SSVSPTSSSSSSSSTGETQTQSSS). Ser-376 carries the post-translational modification Phosphoserine. At Thr-571 the chain carries Phosphothreonine. Ser-572, Ser-592, Ser-608, and Ser-629 each carry phosphoserine. At Thr-633 the chain carries Phosphothreonine. 4 positions are modified to phosphoserine: Ser-637, Ser-652, Ser-655, and Ser-692.

Interacts with FMR1 (via N-terminus). Interacts with DDX6.

The protein localises to the nucleus. The protein resides in the cytoplasm. It localises to the stress granule. Its function is as follows. Binds RNA. The protein is FMR1-interacting protein NUFIP2 of Homo sapiens (Human).